The primary structure comprises 1051 residues: Ubiquitin-activating enzyme E1 1 (1051 aa).

2 consecutive repeat copies span residues 56–194 (GRET…GSVF) and 453–605 (GSKL…QMVI). Positions 56–605 (GRETMKRLFG…GAKCNTQMVI (550 aa)) are 2 approximate repeats. ATP is bound by residues A472, D498, R509, K522, and 570–571 (DN). Catalysis depends on C626, which acts as the Glycyl thioester intermediate.

This sequence belongs to the ubiquitin-activating E1 family. In terms of assembly, monomer. In terms of processing, the N-terminus is blocked.

The catalysed reaction is ATP + ubiquitin + [E1 ubiquitin-activating enzyme]-L-cysteine = AMP + diphosphate + S-ubiquitinyl-[E1 ubiquitin-activating enzyme]-L-cysteine.. It participates in protein modification; protein ubiquitination. Activates ubiquitin by first adenylating its C-terminal glycine residue with ATP, and thereafter linking this residue to the side chain of a cysteine residue in E1, yielding a ubiquitin-E1 thioester and free AMP. In Triticum aestivum (Wheat), this protein is Ubiquitin-activating enzyme E1 1.